Reading from the N-terminus, the 560-residue chain is Trafficking protein particle complex II-specific subunit 65 (560 aa).

The disordered stretch occupies residues 164 to 193 (SSKNTNNHLEKNNRATHRVSSKNSEVHEAD). Residues Ser-393 and Ser-398 each carry the phosphoserine modification.

As to quaternary structure, part of the multisubunit TRAPP (transport protein particle) II complex composed of BET3, BET5, TRS20, TRS23, TRS31, TRS33, TRS65, TRS120 and TRS130. Interacts directly with TRS120 and TRS130.

It localises to the cytoplasm. The protein resides in the golgi apparatus. It is found in the cis-Golgi network. The protein operates within glycan metabolism; beta-glucan biosynthesis. Functionally, specific subunit of the TRAPP II complex, a highly conserved vesicle tethering complex that functions in the late Golgi as a guanine nucleotide exchanger (GEF) for the Golgi YPT1 GTPase. TRS65 plays a role in the YPT GEF activity of TRAPP II in concert with the two other TRAPP II-specific subunits TRS120 and TRS130. Involved in cell wall (1--&gt;6)-beta-glucan synthesis. In Saccharomyces cerevisiae (strain ATCC 204508 / S288c) (Baker's yeast), this protein is Trafficking protein particle complex II-specific subunit 65 (TRS65).